A 243-amino-acid polypeptide reads, in one-letter code: Small ribosomal subunit protein uS2c (243 aa).

The protein belongs to the universal ribosomal protein uS2 family.

The protein resides in the plastid. The protein localises to the chloroplast. The chain is Small ribosomal subunit protein uS2c (rps2) from Cyanidium caldarium (Red alga).